The primary structure comprises 361 residues: Phospho-N-acetylmuramoyl-pentapeptide-transferase (361 aa).

A run of 10 helical transmembrane segments spans residues 27–47, 70–90, 97–117, 134–154, 167–187, 199–219, 236–256, 263–283, 288–308, and 338–358; these read ILAS…MIRW, GTPT…CLLW, SLWL…VDDY, YFWQ…NASL, TVTW…IVGS, GLAI…AYAS, TGEL…FLWY, VFMG…VAVV, LVLL…ILQV, and KVIV…LATL.

It belongs to the glycosyltransferase 4 family. MraY subfamily. The cofactor is Mg(2+).

Its subcellular location is the cell inner membrane. It carries out the reaction UDP-N-acetyl-alpha-D-muramoyl-L-alanyl-gamma-D-glutamyl-meso-2,6-diaminopimeloyl-D-alanyl-D-alanine + di-trans,octa-cis-undecaprenyl phosphate = di-trans,octa-cis-undecaprenyl diphospho-N-acetyl-alpha-D-muramoyl-L-alanyl-D-glutamyl-meso-2,6-diaminopimeloyl-D-alanyl-D-alanine + UMP. It functions in the pathway cell wall biogenesis; peptidoglycan biosynthesis. Catalyzes the initial step of the lipid cycle reactions in the biosynthesis of the cell wall peptidoglycan: transfers peptidoglycan precursor phospho-MurNAc-pentapeptide from UDP-MurNAc-pentapeptide onto the lipid carrier undecaprenyl phosphate, yielding undecaprenyl-pyrophosphoryl-MurNAc-pentapeptide, known as lipid I. The protein is Phospho-N-acetylmuramoyl-pentapeptide-transferase of Legionella pneumophila subsp. pneumophila (strain Philadelphia 1 / ATCC 33152 / DSM 7513).